The following is a 311-amino-acid chain: Light-independent protochlorophyllide reductase iron-sulfur ATP-binding protein (311 aa).

Residues 10 to 15 and lysine 39 each bind ATP; that span reads GIGKST. Residue serine 14 coordinates Mg(2+). 2 residues coordinate [4Fe-4S] cluster: cysteine 95 and cysteine 129. 180 to 181 lines the ATP pocket; it reads NR.

Belongs to the NifH/BchL/ChlL family. In terms of assembly, homodimer. Protochlorophyllide reductase is composed of three subunits; ChlL, ChlN and ChlB. [4Fe-4S] cluster is required as a cofactor.

Its subcellular location is the plastid. It localises to the chloroplast. The catalysed reaction is chlorophyllide a + oxidized 2[4Fe-4S]-[ferredoxin] + 2 ADP + 2 phosphate = protochlorophyllide a + reduced 2[4Fe-4S]-[ferredoxin] + 2 ATP + 2 H2O. It functions in the pathway porphyrin-containing compound metabolism; chlorophyll biosynthesis (light-independent). Its function is as follows. Component of the dark-operative protochlorophyllide reductase (DPOR) that uses Mg-ATP and reduced ferredoxin to reduce ring D of protochlorophyllide (Pchlide) to form chlorophyllide a (Chlide). This reaction is light-independent. The L component serves as a unique electron donor to the NB-component of the complex, and binds Mg-ATP. In Oltmannsiellopsis viridis (Marine flagellate), this protein is Light-independent protochlorophyllide reductase iron-sulfur ATP-binding protein.